A 140-amino-acid polypeptide reads, in one-letter code: Small ribosomal subunit protein uS12 (140 aa).

Positions 33 to 55 (KEQTNVSSPQKRGVCTRVGTMTP) are disordered.

Belongs to the universal ribosomal protein uS12 family. As to quaternary structure, part of the 30S ribosomal subunit. Contacts proteins S8 and S17. May interact with IF1 in the 30S initiation complex.

In terms of biological role, with S4 and S5 plays an important role in translational accuracy. Its function is as follows. Interacts with and stabilizes bases of the 16S rRNA that are involved in tRNA selection in the A site and with the mRNA backbone. Located at the interface of the 30S and 50S subunits, it traverses the body of the 30S subunit contacting proteins on the other side and probably holding the rRNA structure together. The combined cluster of proteins S8, S12 and S17 appears to hold together the shoulder and platform of the 30S subunit. This Geobacillus kaustophilus (strain HTA426) protein is Small ribosomal subunit protein uS12.